A 524-amino-acid polypeptide reads, in one-letter code: Phosphoenolpyruvate carboxykinase (ATP) (524 aa).

R52, Y188, and K194 together coordinate substrate. ATP-binding positions include K194, H213, and 229 to 237 (GLSGTGKTT). Mn(2+)-binding residues include K194 and H213. D250 contacts Mn(2+). 3 residues coordinate ATP: E278, R314, and T439. R314 serves as a coordination point for substrate.

The protein belongs to the phosphoenolpyruvate carboxykinase (ATP) family. The cofactor is Mn(2+).

It localises to the cytoplasm. The enzyme catalyses oxaloacetate + ATP = phosphoenolpyruvate + ADP + CO2. The protein operates within carbohydrate biosynthesis; gluconeogenesis. In terms of biological role, involved in the gluconeogenesis. Catalyzes the conversion of oxaloacetate (OAA) to phosphoenolpyruvate (PEP) through direct phosphoryl transfer between the nucleoside triphosphate and OAA. The chain is Phosphoenolpyruvate carboxykinase (ATP) from Campylobacter jejuni subsp. jejuni serotype O:23/36 (strain 81-176).